Consider the following 23-residue polypeptide: Potassium channel toxin kappa-KTx 1.2 (23 aa).

2 disulfide bridges follow: Cys-4/Cys-22 and Cys-8/Cys-18. Residue Cys-22 is modified to Cysteine amide.

It belongs to the short scorpion toxin superfamily. Potassium channel inhibitor kappa-KTx family. Kappa-KTx 1 subfamily. In terms of processing, the two disulfide isomers globular (C1-C3, C2-C4) and beads (C1-C2, C3-C4) do not show activity on Kv10.1/KCNH1/EAG1. In terms of tissue distribution, expressed by the venom gland.

Its subcellular location is the secreted. In terms of biological role, shows weak blocking activity on voltage-gated potassium channels Kv10.1/KCNH1/EAG1 (IC(50)=26 uM), Kv1.2/KCNA2 (Kd=150 uM), Kv1.3/KCNA3 (Kd=40 uM), Kv1.6/KCNA3 (16.6% inhibition at 40 uM toxin). The block is dose-dependent, voltage-independent, and reversible. Also shows a weak inhibitory activity on the plant pathogen F.culmorum growth (IC(50)=18.8-37.7 uM). The sequence is that of Potassium channel toxin kappa-KTx 1.2 from Chersonesometrus fulvipes (Indian black scorpion).